We begin with the raw amino-acid sequence, 647 residues long: Leucine-rich repeat transmembrane protein FLRT3 (647 aa).

A signal peptide spans 1 to 28; that stretch reads MITVPWSVFLIWTKIGLLLDMAPYSVAA. The Extracellular segment spans residues 29 to 526; the sequence is KPCPSVCRCD…KEPYKNSSVP (498 aa). Residues 30–62 enclose the LRRNT domain; that stretch reads PCPSVCRCDVGFIYCNDRDLTSIPTGIPEDATN. Cystine bridges form between C31-C37 and C35-C44. LRR repeat units lie at residues 58–82, 83–105, 107–126, 127–152, 154–179, 181–197, 198–223, 225–246, 247–269, and 270–293; these read EDAT…LKNL, RRVE…LPKY, KELH…SLSQ, IPYL…AFRD, IYLR…TIEE, RLDD…SLQD, LTNL…VFMN, VNLT…NLPG, TNLR…AFSY, and LRQL…VFDD. N226 carries an N-linked (GlcNAc...) asparagine glycan. The region spanning 305–356 is the LRRCT domain; the sequence is NPWHCGCKMKWVRDWLQSLPLKVNVRGLMCQAPEKVRGMAIKDLNAELFDCK. Residues C309 and C334 are joined by a disulfide bond. In terms of domain architecture, Fibronectin type-III spans 404-502; the sequence is PVRKIITIFV…ECIETETAPL (99 aa). The helical transmembrane segment at 527-547 threads the bilayer; that stretch reads LAAIIGGAVALVALALLALVC. At 548 to 647 the chain is on the cytoplasmic side; it reads WYVHRNGALF…GIPDSDHSHS (100 aa). The tract at residues 620 to 647 is disordered; sequence LYKNSHSESSSNRSYRDSGIPDSDHSHS.

In terms of processing, N-glycosylated. Post-translationally, proteolytic cleavage in the juxtamembrane region gives rise to a soluble ectodomain. Cleavage is probably effected by a metalloprotease.

Its subcellular location is the cell membrane. The protein localises to the endoplasmic reticulum membrane. It localises to the cell junction. The protein resides in the focal adhesion. It is found in the secreted. Its subcellular location is the cell projection. The protein localises to the axon. It localises to the growth cone membrane. In terms of biological role, modulates the structure and function of the apical ectodermal ridge (AER) that controls embryonic limb development. Functions in cell-cell adhesion, cell migration and axon guidance, exerting an attractive or repulsive role depending on its interaction partners. Plays a role in the spatial organization of brain neurons. Plays a role in vascular development. Plays a role in cell-cell adhesion via its interaction with latrophilins that are expressed at the surface of adjacent cells. Mediates axon attraction towards cells expressing NTN1. Mediates axon growth cone collapse and plays a repulsive role in neuron guidance via its interaction with UNC-5 family members. Plays a role in the regulation of the density of glutamaergic synapses. Plays a role in fibroblast growth factor-mediated signaling cascades. Required for normal morphogenesis during embryonic development, but not for normal embryonic patterning. The protein is Leucine-rich repeat transmembrane protein FLRT3 (FLRT3) of Gallus gallus (Chicken).